Reading from the N-terminus, the 288-residue chain is 4-hydroxybenzoate octaprenyltransferase (288 aa).

Transmembrane regions (helical) follow at residues 33-53 (LWALWVASPGVPPLWILAVFV), 99-119 (LFIVLVLLSFLLVLTLNTMTI), 163-183 (ESLPLSCWLMFLANILWAVAY), 213-233 (LIIGILQVAVLALMGAVGWLN), 234-254 (GLGWEYYWSLFVAAGLFGWQQ), and 268-288 (AFMNNNYVGLVLFLGLAMSYL).

It belongs to the UbiA prenyltransferase family. Requires Mg(2+) as cofactor.

It localises to the cell inner membrane. The catalysed reaction is all-trans-octaprenyl diphosphate + 4-hydroxybenzoate = 4-hydroxy-3-(all-trans-octaprenyl)benzoate + diphosphate. The protein operates within cofactor biosynthesis; ubiquinone biosynthesis. Functionally, catalyzes the prenylation of para-hydroxybenzoate (PHB) with an all-trans polyprenyl group. Mediates the second step in the final reaction sequence of ubiquinone-8 (UQ-8) biosynthesis, which is the condensation of the polyisoprenoid side chain with PHB, generating the first membrane-bound Q intermediate 3-octaprenyl-4-hydroxybenzoate. The protein is 4-hydroxybenzoate octaprenyltransferase of Klebsiella pneumoniae subsp. pneumoniae (strain ATCC 700721 / MGH 78578).